A 286-amino-acid chain; its full sequence is ATP phosphoribosyltransferase (286 aa).

The protein belongs to the ATP phosphoribosyltransferase family. Long subfamily. It depends on Mg(2+) as a cofactor.

It localises to the cytoplasm. The catalysed reaction is 1-(5-phospho-beta-D-ribosyl)-ATP + diphosphate = 5-phospho-alpha-D-ribose 1-diphosphate + ATP. Its pathway is amino-acid biosynthesis; L-histidine biosynthesis; L-histidine from 5-phospho-alpha-D-ribose 1-diphosphate: step 1/9. Feedback inhibited by histidine. Functionally, catalyzes the condensation of ATP and 5-phosphoribose 1-diphosphate to form N'-(5'-phosphoribosyl)-ATP (PR-ATP). Has a crucial role in the pathway because the rate of histidine biosynthesis seems to be controlled primarily by regulation of HisG enzymatic activity. The sequence is that of ATP phosphoribosyltransferase from Paenarthrobacter aurescens (strain TC1).